The sequence spans 94 residues: Small ribosomal subunit protein bS16 (94 aa).

The protein belongs to the bacterial ribosomal protein bS16 family.

This is Small ribosomal subunit protein bS16 from Thermosipho africanus (strain TCF52B).